The following is a 116-amino-acid chain: U16-barytoxin-Tl1c (116 aa).

The first 20 residues, 1–20 (MKTIIVFLSLLVLATKFGDA), serve as a signal peptide directing secretion. The propeptide occupies 21–76 (NEGVNQEQMKEVIQNEFREDFLNEMAPMSLLQQLEAIESTLLEKEADRNSRQKRCN). 3 cysteine pairs are disulfide-bonded: Cys75–Cys90, Cys82–Cys95, and Cys89–Cys110.

It belongs to the neurotoxin 14 (magi-1) family. 06 (ICK-Trit) subfamily. As to expression, expressed by the venom gland.

It localises to the secreted. Functionally, ion channel inhibitor. The protein is U16-barytoxin-Tl1c of Trittame loki (Brush-footed trapdoor spider).